The chain runs to 483 residues: Protein nucleotidyltransferase YdiU (483 aa).

8 residues coordinate ATP: glycine 87, glycine 89, arginine 90, lysine 110, aspartate 122, glycine 123, arginine 173, and arginine 180. Aspartate 249 serves as the catalytic Proton acceptor. Residues asparagine 250 and aspartate 259 each contribute to the Mg(2+) site. Aspartate 259 contacts ATP.

The protein belongs to the SELO family. The cofactor is Mg(2+). It depends on Mn(2+) as a cofactor.

The enzyme catalyses L-seryl-[protein] + ATP = 3-O-(5'-adenylyl)-L-seryl-[protein] + diphosphate. It catalyses the reaction L-threonyl-[protein] + ATP = 3-O-(5'-adenylyl)-L-threonyl-[protein] + diphosphate. The catalysed reaction is L-tyrosyl-[protein] + ATP = O-(5'-adenylyl)-L-tyrosyl-[protein] + diphosphate. It carries out the reaction L-histidyl-[protein] + UTP = N(tele)-(5'-uridylyl)-L-histidyl-[protein] + diphosphate. The enzyme catalyses L-seryl-[protein] + UTP = O-(5'-uridylyl)-L-seryl-[protein] + diphosphate. It catalyses the reaction L-tyrosyl-[protein] + UTP = O-(5'-uridylyl)-L-tyrosyl-[protein] + diphosphate. In terms of biological role, nucleotidyltransferase involved in the post-translational modification of proteins. It can catalyze the addition of adenosine monophosphate (AMP) or uridine monophosphate (UMP) to a protein, resulting in modifications known as AMPylation and UMPylation. The polypeptide is Protein nucleotidyltransferase YdiU (Yersinia pseudotuberculosis serotype O:1b (strain IP 31758)).